Consider the following 715-residue polypeptide: SEC14-like protein 1 (715 aa).

The PRELI/MSF1 domain occupies 1–175 (MVQKYQSPVR…YLRQLEEEGI (175 aa)). The tract at residues 1–510 (MVQKYQSPVR…VPKSLYRTAE (510 aa)) is required for interaction and inhibitory function toward RIGI. At threonine 234 the chain carries Phosphothreonine. One can recognise a CRAL-TRIO domain in the interval 319 to 495 (PPQVLQDYYA…FLSGECMCEV (177 aa)). A GOLD domain is found at 521–674 (TETIYQSASV…KCKVMYYTEV (154 aa)). The residue at position 586 (serine 586) is a Phosphoserine.

In terms of assembly, interacts with RIGI (via tandem CARD domain); the interaction is direct. Interacts (via GOLD domain) with SLC18A3; the interaction is direct. Interacts with SLC5A7 (via GOLD domain); the interaction is direct. Ubiquitous.

The protein localises to the cytoplasm. It is found in the golgi apparatus. In terms of biological role, may play a role in innate immunity by inhibiting the antiviral RIG-I signaling pathway. In this pathway, functions as a negative regulator of RIGI, the cytoplasmic sensor of viral nucleic acids. Prevents the interaction of RIGI with MAVS/IPS1, an important step in signal propagation. May also regulate the SLC18A3 and SLC5A7 cholinergic transporters. The protein is SEC14-like protein 1 (SEC14L1) of Homo sapiens (Human).